The primary structure comprises 203 residues: MGNTDKLMNQIFDLKFTSKSLQRQSRKCEKEEKAEKLKVKKAIEKGNMDGARIYAENAIRKRSEQMNYLRLASRLDAVVARLDTQAKMTTITKSMTNIVKSLESSLATGNLQKMSETMDSFEKQFVNMEVQAEFMENAMAGSTSLSTPEGEVNSLMQQVADDYGLEVSVGLPQPAGHAIPTKTEEKVDEDDLSRRLAELKARG.

Coiled coils occupy residues 13–51 and 109–140; these read DLKFTSKSLQRQSRKCEKEEKAEKLKVKKAIEKGNMDGA and GNLQKMSETMDSFEKQFVNMEVQAEFMENAMA. The interval 172 to 203 is disordered; the sequence is PQPAGHAIPTKTEEKVDEDDLSRRLAELKARG. A compositionally biased stretch (basic and acidic residues) spans 192-203; sequence LSRRLAELKARG.

It belongs to the SNF7 family. As to quaternary structure, interacts with CHMP1A and LIP5. Interacts with VPS2.2.

It localises to the cytoplasm. The protein localises to the endosome membrane. Functionally, involved in ESCRT-dependent multivesicular body (MVB) formation and sorting of endosomal cargo proteins into MVBs. Mediates the MVB sorting of the auxin carriers PIN1, PIN2 and AUX1. Required for embryonic axis establishment and seedling growth. Required for autophagic degradation of plastid proteins. Promotes the efficient sequestration of cargo from plastids into autophagosomes. Mediates the efficient delivery of autophagic plastid bodies to the vacuole, but not into the cytoplasm. This Arabidopsis thaliana (Mouse-ear cress) protein is ESCRT-related protein CHMP1B.